The primary structure comprises 260 residues: Acetylglutamate kinase (260 aa).

Substrate contacts are provided by residues 45-46 (GG), Arg67, and Asn159.

This sequence belongs to the acetylglutamate kinase family. ArgB subfamily.

It localises to the cytoplasm. The enzyme catalyses N-acetyl-L-glutamate + ATP = N-acetyl-L-glutamyl 5-phosphate + ADP. It functions in the pathway amino-acid biosynthesis; L-arginine biosynthesis; N(2)-acetyl-L-ornithine from L-glutamate: step 2/4. In terms of biological role, catalyzes the ATP-dependent phosphorylation of N-acetyl-L-glutamate. The polypeptide is Acetylglutamate kinase (Colwellia psychrerythraea (strain 34H / ATCC BAA-681) (Vibrio psychroerythus)).